A 54-amino-acid chain; its full sequence is Ovomucoid (54 aa).

One can recognise a Kazal-like domain in the interval 4 to 54 (VDCSDYPKPACTLEYMPLCGSDNKTYGNKCNFCNAVVDSNGTLTLSHFGKC). Cystine bridges form between Cys6–Cys36, Cys14–Cys33, and Cys22–Cys54. N-linked (GlcNAc...) asparagine glycosylation occurs at Asn43.

The protein resides in the secreted. The polypeptide is Ovomucoid (Dendrocygna arcuata (Wandering whistling-duck)).